Consider the following 338-residue polypeptide: tRNA N6-adenosine threonylcarbamoyltransferase (338 aa).

Histidine 114 and histidine 118 together coordinate Fe cation. Substrate-binding positions include 137–141 (IVSGG), aspartate 170, glycine 183, aspartate 187, and asparagine 277. Aspartate 305 lines the Fe cation pocket.

The protein belongs to the KAE1 / TsaD family. The cofactor is Fe(2+).

It is found in the cytoplasm. The catalysed reaction is L-threonylcarbamoyladenylate + adenosine(37) in tRNA = N(6)-L-threonylcarbamoyladenosine(37) in tRNA + AMP + H(+). Its function is as follows. Required for the formation of a threonylcarbamoyl group on adenosine at position 37 (t(6)A37) in tRNAs that read codons beginning with adenine. Is involved in the transfer of the threonylcarbamoyl moiety of threonylcarbamoyl-AMP (TC-AMP) to the N6 group of A37, together with TsaE and TsaB. TsaD likely plays a direct catalytic role in this reaction. This is tRNA N6-adenosine threonylcarbamoyltransferase from Clostridioides difficile (strain 630) (Peptoclostridium difficile).